A 126-amino-acid polypeptide reads, in one-letter code: Cysteine-rich tail protein 1 (126 aa).

Residues 1–89 (MDPHETLVKN…PAGLAYAGPP (89 aa)) form a disordered region.

The protein belongs to the CYSRT1 family. In terms of assembly, interacts with components of the late cornfied envelope (LCE).

It is found in the cornified envelope. Its function is as follows. Component of the stratum corneum that may contribute to epidermal antimicrobial host defenses. In Bos taurus (Bovine), this protein is Cysteine-rich tail protein 1 (CYSRT1).